The sequence spans 639 residues: Probable endo-1,3(4)-beta-glucanase ACLA_073210 (639 aa).

Residues 1 to 21 form the signal peptide; sequence MAPSSLLLSVGSLIASSLASA. In terms of domain architecture, GH16 spans 26–290; the sequence is IREQSQSYQL…WAGNVFGESG (265 aa). An N-linked (GlcNAc...) asparagine glycan is attached at N65. E146 acts as the Nucleophile in catalysis. E151 functions as the Proton donor in the catalytic mechanism. Disordered stretches follow at residues 337 to 384 and 442 to 545; these read TVAS…TVAE and QSSS…GSSI. Over residues 339–348 the composition is skewed to polar residues; that stretch reads ASPNTASEVH. Low complexity-rich tracts occupy residues 362 to 376 and 478 to 488; these read PTVP…VPPA and TTTEAVAETET. Residue A617 is the site of GPI-anchor amidated alanine attachment. The propeptide at 618–639 is removed in mature form; the sequence is GARKLSVGLSGLVGALAVAALA.

The protein belongs to the glycosyl hydrolase 16 family.

The protein resides in the cell membrane. It carries out the reaction Endohydrolysis of (1-&gt;3)- or (1-&gt;4)-linkages in beta-D-glucans when the glucose residue whose reducing group is involved in the linkage to be hydrolyzed is itself substituted at C-3.. Functionally, mixed-linked glucanase involved in the degradation of complex natural cellulosic substrates. The polypeptide is Probable endo-1,3(4)-beta-glucanase ACLA_073210 (Aspergillus clavatus (strain ATCC 1007 / CBS 513.65 / DSM 816 / NCTC 3887 / NRRL 1 / QM 1276 / 107)).